The sequence spans 501 residues: Serine/threonine-protein kinase pelle (501 aa).

The tract at residues 1–25 (MSGVQTAEAEAQAQNQANGNRTRSR) is disordered. Low complexity predominate over residues 7 to 18 (AEAEAQAQNQAN). One can recognise a Death domain in the interval 55-121 (WQQLATAVKL…NAMRLIKDYV (67 aa)). The disordered stretch occupies residues 144-176 (DSSAKVNNGPPFPSSSGVSNSNNNRTSTTATEE). Positions 149–167 (VNNGPPFPSSSGVSNSNNN) are enriched in low complexity. The Protein kinase domain occupies 213-499 (WSPDNRLGQG…AVLKRFEPFV (287 aa)). Residues 219–227 (LGQGGFGDV) and lysine 240 each bind ATP. The active-site Proton acceptor is the aspartate 346. ATP-binding positions include 348-351 (KPAN) and aspartate 364.

Belongs to the protein kinase superfamily. TKL Ser/Thr protein kinase family. Pelle subfamily. In terms of assembly, interacts (via Death domain) with tub (via Death domain). Interacts with Pellino (Pli).

The protein localises to the cell membrane. It localises to the cytoplasm. The catalysed reaction is L-seryl-[protein] + ATP = O-phospho-L-seryl-[protein] + ADP + H(+). It catalyses the reaction L-threonyl-[protein] + ATP = O-phospho-L-threonyl-[protein] + ADP + H(+). In terms of biological role, plays an essential role in the Tl receptor signaling pathway that establishes embryonic dorsoventral polarity; the signal directs import of dl into ventral and ventrolateral nuclei, thereby establishing dorsoventral polarity. Tub recruits pll to the plasma membrane and protein-protein interaction activates pll. This is Serine/threonine-protein kinase pelle (pll) from Drosophila melanogaster (Fruit fly).